Consider the following 418-residue polypeptide: Dihydrolipoyllysine-residue acetyltransferase component of pyruvate dehydrogenase complex (418 aa).

Residues 2-78 form the Lipoyl-binding domain; it reads PIKLLMPALS…PVNSLIAVLI (77 aa). K43 carries the N6-lipoyllysine modification. The 38-residue stretch at 133 to 170 folds into the Peripheral subunit-binding (PSBD) domain; sequence FASPLAKRLAKIQNVRIEEIKGSGPHGRIIKQDVLSHK. Residue H388 is part of the active site.

Belongs to the 2-oxoacid dehydrogenase family. As to quaternary structure, forms a 24-polypeptide structural core with octahedral symmetry. Requires (R)-lipoate as cofactor.

The catalysed reaction is N(6)-[(R)-dihydrolipoyl]-L-lysyl-[protein] + acetyl-CoA = N(6)-[(R)-S(8)-acetyldihydrolipoyl]-L-lysyl-[protein] + CoA. Functionally, the pyruvate dehydrogenase complex catalyzes the overall conversion of pyruvate to acetyl-CoA and CO(2). It contains multiple copies of three enzymatic components: pyruvate dehydrogenase (E1), dihydrolipoamide acetyltransferase (E2) and lipoamide dehydrogenase (E3). The polypeptide is Dihydrolipoyllysine-residue acetyltransferase component of pyruvate dehydrogenase complex (pdhC) (Rickettsia bellii (strain RML369-C)).